Reading from the N-terminus, the 93-residue chain is Protein YzgL (93 aa).

The polypeptide is Protein YzgL (yzgL) (Escherichia coli (strain K12)).